The primary structure comprises 414 residues: MIAEIIAVGSEMLTPFRQDTNSLYLTEKFNSLGVTIAFKTIVGDKQRHLVDAIRQALRRVDIVAISGGLGPTEDDLTRECVAEALGRTLTRDAALIANMYARAAARRVTITRNNEKQADVIDGAVILENGRGTAPGQWLDIVHGEHRKLLMLLPGPPSELKGMFDEQCMPLLADALPKRAIAMRVLKAAMIGESQCDARIAPIYQQYTDIETTILAHLGDIQLNLSCSKPFLAQARLRVDELASRIEEELDDVLYSSQGETLEQIVLYYLEMRGASLAVAESCTGGLISERLTGIPGSSRSFAGGAVVYSNELKTLLAGVDPELIGSYGAVSSQVAKALAEGIRERCSAHFGLGVTGIAGPGGGSEDKPVGLVYLAVSTPEETTVLERRFTGDRHRIRHLAAQQALDMVRRRLM.

It belongs to the CinA family.

In Acidobacterium capsulatum (strain ATCC 51196 / DSM 11244 / BCRC 80197 / JCM 7670 / NBRC 15755 / NCIMB 13165 / 161), this protein is CinA-like protein.